Reading from the N-terminus, the 353-residue chain is Suppressor of RNA-mediated gene silencing (353 aa).

It belongs to the phytoreovirus non-structural protein 10 family.

In terms of biological role, suppressor of RNA-mediated gene silencing, also known as post-transcriptional gene silencing (PTGS), a mechanism of plant viral defense that limits the accumulation of viral RNAs. The polypeptide is Suppressor of RNA-mediated gene silencing (Rice dwarf virus (isolate Fujian) (RDV)).